A 217-amino-acid polypeptide reads, in one-letter code: Somatotropin (217 aa).

The N-terminal stretch at methionine 1 to alanine 27 is a signal peptide. Histidine 46 lines the Zn(2+) pocket. A disulfide bridge links cysteine 79 with cysteine 190. Serine 132 is subject to Phosphoserine. Residue glutamate 199 participates in Zn(2+) binding. The cysteines at positions 207 and 215 are disulfide-linked.

Belongs to the somatotropin/prolactin family.

Its subcellular location is the secreted. Its function is as follows. Plays an important role in growth control. Its major role in stimulating body growth is to stimulate the liver and other tissues to secrete IGF1. It stimulates both the differentiation and proliferation of myoblasts. It also stimulates amino acid uptake and protein synthesis in muscle and other tissues. This is Somatotropin (GH1) from Giraffa camelopardalis (Giraffe).